Here is a 75-residue protein sequence, read N- to C-terminus: Small ribosomal subunit protein bS18 (75 aa).

It belongs to the bacterial ribosomal protein bS18 family. As to quaternary structure, part of the 30S ribosomal subunit. Forms a tight heterodimer with protein bS6.

Binds as a heterodimer with protein bS6 to the central domain of the 16S rRNA, where it helps stabilize the platform of the 30S subunit. The sequence is that of Small ribosomal subunit protein bS18 from Shewanella baltica (strain OS223).